Here is a 514-residue protein sequence, read N- to C-terminus: Cholesterol side-chain cleavage enzyme, mitochondrial (514 aa).

Residues 1–39 (SFRLSLSASTYAQRGSFTTPEHDFTLFPHRNHSVTSESR) constitute a mitochondrion transit peptide. C461 is a heme binding site.

The protein belongs to the cytochrome P450 family. Heme serves as cofactor.

The protein resides in the mitochondrion inner membrane. It carries out the reaction 6 reduced [adrenodoxin] + cholesterol + 3 O2 + 6 H(+) = 4-methylpentanal + pregnenolone + 6 oxidized [adrenodoxin] + 4 H2O. Its pathway is lipid metabolism; C21-steroid hormone metabolism. Catalyzes the side-chain cleavage reaction of cholesterol to pregnenolone, the precursor of most steroid hormones. This is Cholesterol side-chain cleavage enzyme, mitochondrial (CYP11A1) from Hypanus americanus (Southern stingray).